The following is a 352-amino-acid chain: MTATATRHDWTLQEARELFNLPFNDLLFRAQSIHREHFDPNEVQVSTLLSIKTGACPEDCKYCPQSGHYNTGLEKEKLLEIEKVVAEARVAREKGASRFCMGAAWRSPSKKDMPYVLDMVRQVKSLGLETCMTLGMLKEEEAKELADAGLDYYNHNLDTSEKYYNHIITTRTYQDRLDTLDNVRKAGMKVCCGGIMGMGEDEDDRVGLLVQLANLPQHPESVPVNMLVKVKGTPLEDVEDLDPFDFIRIIAVARIMMPASHVRLSAGREQMNEQMQALCFMAGANSIFYGEKLLTTSNPEADADMQLFRKLGIRPEQREQCATEEQEEEAIAEAVEYEATRHMFYDATRESA.

A Radical SAM core domain is found at 41–268; the sequence is NEVQVSTLLS…ASHVRLSAGR (228 aa). [4Fe-4S] cluster contacts are provided by cysteine 56, cysteine 60, and cysteine 63. The [2Fe-2S] cluster site is built by cysteine 100, cysteine 131, cysteine 191, and arginine 263.

The protein belongs to the radical SAM superfamily. Biotin synthase family. Homodimer. [4Fe-4S] cluster is required as a cofactor. Requires [2Fe-2S] cluster as cofactor.

The catalysed reaction is (4R,5S)-dethiobiotin + (sulfur carrier)-SH + 2 reduced [2Fe-2S]-[ferredoxin] + 2 S-adenosyl-L-methionine = (sulfur carrier)-H + biotin + 2 5'-deoxyadenosine + 2 L-methionine + 2 oxidized [2Fe-2S]-[ferredoxin]. The protein operates within cofactor biosynthesis; biotin biosynthesis; biotin from 7,8-diaminononanoate: step 2/2. Functionally, catalyzes the conversion of dethiobiotin (DTB) to biotin by the insertion of a sulfur atom into dethiobiotin via a radical-based mechanism. In Marinobacter nauticus (strain ATCC 700491 / DSM 11845 / VT8) (Marinobacter aquaeolei), this protein is Biotin synthase.